The sequence spans 264 residues: Type III pantothenate kinase (264 aa).

6–13 is a binding site for ATP; it reads DVRNTSIE. Residue 109–112 coordinates substrate; sequence GADR. Asp111 acts as the Proton acceptor in catalysis. Asp131 is a K(+) binding site. Thr134 lines the ATP pocket. Substrate is bound at residue Thr185.

Belongs to the type III pantothenate kinase family. Homodimer. Requires NH4(+) as cofactor. It depends on K(+) as a cofactor.

The protein resides in the cytoplasm. It carries out the reaction (R)-pantothenate + ATP = (R)-4'-phosphopantothenate + ADP + H(+). It participates in cofactor biosynthesis; coenzyme A biosynthesis; CoA from (R)-pantothenate: step 1/5. Functionally, catalyzes the phosphorylation of pantothenate (Pan), the first step in CoA biosynthesis. The polypeptide is Type III pantothenate kinase (Nocardia farcinica (strain IFM 10152)).